A 286-amino-acid chain; its full sequence is MKHFSVKACAKINLGLLITSRRADGYHTLETIFAPIDWFDTLEFTESDAISMECSNLDLLVDDSNLCIRAAKALQEHTGVKRGATIKLLKRVPFGAGLGGGSSDAAATLNALCKLWQIDVPSAELHKLAVKLGADVPYFLEMKGLAYAAGIGEELEDLNLALPWHVVTVFPEVQVPTAWAYKNFHRQFERPVPDLKTLVRRLCHERDISVFGVFENDFASVVFEHYPVVREVRDALAASGAQFVSLSGSGSAVYALYEGRADAVKAAEAMSARFRINMTPAGFRME.

Lysine 11 is a catalytic residue. Position 93 to 103 (93 to 103) interacts with ATP; it reads PFGAGLGGGSS. Aspartate 135 is a catalytic residue.

This sequence belongs to the GHMP kinase family. IspE subfamily.

The catalysed reaction is 4-CDP-2-C-methyl-D-erythritol + ATP = 4-CDP-2-C-methyl-D-erythritol 2-phosphate + ADP + H(+). The protein operates within isoprenoid biosynthesis; isopentenyl diphosphate biosynthesis via DXP pathway; isopentenyl diphosphate from 1-deoxy-D-xylulose 5-phosphate: step 3/6. Its function is as follows. Catalyzes the phosphorylation of the position 2 hydroxy group of 4-diphosphocytidyl-2C-methyl-D-erythritol. The chain is 4-diphosphocytidyl-2-C-methyl-D-erythritol kinase from Chlorobaculum tepidum (strain ATCC 49652 / DSM 12025 / NBRC 103806 / TLS) (Chlorobium tepidum).